The following is a 348-amino-acid chain: Probable dual-specificity RNA methyltransferase RlmN (348 aa).

E93 acts as the Proton acceptor in catalysis. Residues 99 to 333 enclose the Radical SAM core domain; sequence TEKRLTACLS…VSLRKSRGLD (235 aa). C106 and C338 form a disulfide bridge. [4Fe-4S] cluster-binding residues include C113, C117, and C120. S-adenosyl-L-methionine is bound by residues 160-161, S190, 219-221, and N295; these read GE and SLH. C338 functions as the S-methylcysteine intermediate in the catalytic mechanism.

It belongs to the radical SAM superfamily. RlmN family. [4Fe-4S] cluster is required as a cofactor.

It is found in the cytoplasm. The enzyme catalyses adenosine(2503) in 23S rRNA + 2 reduced [2Fe-2S]-[ferredoxin] + 2 S-adenosyl-L-methionine = 2-methyladenosine(2503) in 23S rRNA + 5'-deoxyadenosine + L-methionine + 2 oxidized [2Fe-2S]-[ferredoxin] + S-adenosyl-L-homocysteine. It carries out the reaction adenosine(37) in tRNA + 2 reduced [2Fe-2S]-[ferredoxin] + 2 S-adenosyl-L-methionine = 2-methyladenosine(37) in tRNA + 5'-deoxyadenosine + L-methionine + 2 oxidized [2Fe-2S]-[ferredoxin] + S-adenosyl-L-homocysteine. Its function is as follows. Specifically methylates position 2 of adenine 2503 in 23S rRNA and position 2 of adenine 37 in tRNAs. This chain is Probable dual-specificity RNA methyltransferase RlmN, found in Prochlorococcus marinus (strain MIT 9215).